An 858-amino-acid polypeptide reads, in one-letter code: GDP-fucose protein O-fucosyltransferase 2 (858 aa).

Over 1–150 (MHCQLGGQAR…RPPCLLNHRR (150 aa)) the chain is Cytoplasmic. A helical; Signal-anchor for type II membrane protein membrane pass occupies residues 151–171 (LLLGLVSVLTVFLSCLPFTNA). Topologically, residues 172-858 (TVSPAALQDV…WPSLDPSSTL (687 aa)) are lumenal. 237–241 (GEGFH) is a GDP-beta-L-fucose binding site. E238 functions as the Proton acceptor in the catalytic mechanism. Residues 448–510 (AALTPQERQR…SRSRKEIQEE (63 aa)) are disordered. The span at 486–510 (DGEREKRKPGRRSDTSRSRKEIQEE) shows a compositional bias: basic and acidic residues. GDP-beta-L-fucose contacts are provided by residues 646–648 (HLR) and 787–788 (RF). The tract at residues 819–858 (TGGQAQGKCFATKSHDPPEGRSRSELRRKYWPSLDPSSTL) is disordered. Residues 831–846 (KSHDPPEGRSRSELRR) show a composition bias toward basic and acidic residues.

It belongs to the glycosyltransferase 68 family.

The protein localises to the endoplasmic reticulum membrane. It carries out the reaction L-seryl-[protein] + GDP-beta-L-fucose = 3-O-(alpha-L-fucosyl)-L-seryl-[protein] + GDP + H(+). The catalysed reaction is L-threonyl-[protein] + GDP-beta-L-fucose = 3-O-(alpha-L-fucosyl)-L-threonyl-[protein] + GDP + H(+). It participates in protein modification; protein glycosylation. Functionally, catalyzes the reaction that attaches fucose through an O-glycosidic linkage to a conserved serine or threonine residue in the consensus sequence C1-X-X-S/T-C2 of thrombospondin type I repeats (TSRs) where C1 and C2 are the first and second cysteines of the repeat, respectively. O-fucosylates microneme protein MIC2 and may play a role in its stabilization. Probably by regulating protein O-fucosylation, may play a role in tachyzoite adhesion to and/or invasion of host cells; however, POFUT2 involvement in adhesion/invasion is controversial. This is GDP-fucose protein O-fucosyltransferase 2 from Toxoplasma gondii (strain ATCC 50853 / GT1).